A 182-amino-acid polypeptide reads, in one-letter code: MGLLSILRKLKSAPDQEVRILLLGLDNAGKTTLLKQLASEDISHITPTQGFNIKSVQSQGFKLNVWDIGGQRKIRPYWRSYFENTDILIYVIDSADRKRFEETGQELTELLEEEKLSCVPVLIFANKQDLLTAAPASEIAEGLNLHTIRDRVWQIQSCSALTGEGVQDGMNWVCKNVNAKKK.

A lipid anchor (N-myristoyl glycine) is attached at G2. Position 5 is a phosphoserine (S5). GTP contacts are provided by residues G24–T31, T48, D67–Q71, G70, N126–D129, and S159–L161. Residues T31 and T48 each contribute to the Mg(2+) site.

This sequence belongs to the small GTPase superfamily. Arf family. Found in a complex with ARL3, RP2 and UNC119 (or UNC119B); RP2 induces hydrolysis of GTP ARL3 in the complex, leading to the release of UNC119 (or UNC119B). Interacts with RP2; interaction is direct and stimulated with the activated GTP-bound form of ARL3. Interacts with SYS1. Interacts with ARL2BP; the GTP-bound form interacts with ARL2BP. Microtubule-associated protein. Does not interact with TBCC. Interacts with RP2. Interacts with PDE6D; the interaction occurs specifically with the GTP-bound form of ARL3. Interacts with GGA1; the interaction recruits PKD1:PKD2 complex to trans-Golgi network and is required for ciliary targeting of PKD1:PKD2 complex. Interacts with DNAAF9.

The protein localises to the golgi apparatus membrane. The protein resides in the cytoplasm. It localises to the cytoskeleton. Its subcellular location is the spindle. It is found in the nucleus. The protein localises to the microtubule organizing center. The protein resides in the centrosome. It localises to the cell projection. Its subcellular location is the cilium. Functionally, small GTP-binding protein which cycles between an inactive GDP-bound and an active GTP-bound form, and the rate of cycling is regulated by guanine nucleotide exchange factors (GEF) and GTPase-activating proteins (GAP). Required for normal cytokinesis and cilia signaling. Required for targeting proteins to the cilium, including myristoylated NPHP3 and prenylated INPP5E. Targets NPHP3 to the ciliary membrane by releasing myristoylated NPHP3 from UNC119B cargo adapter into the cilium. Requires assistance from GTPase-activating proteins (GAPs) like RP2 and PDE6D, in order to cycle between inactive GDP-bound and active GTP-bound forms. Required for PKD1:PKD2 complex targeting from the trans-Golgi network to the cilium. This is ADP-ribosylation factor-like protein 3 from Mus musculus (Mouse).